The following is a 239-amino-acid chain: Succinate dehydrogenase [ubiquinone] iron-sulfur subunit (239 aa).

The 2Fe-2S ferredoxin-type domain occupies 24–99 (AEAKFSVHPI…NANIITIYPL (76 aa)). [2Fe-2S] cluster is bound by residues Cys-63, Cys-68, Cys-71, and Cys-83. Residues 142–172 (DRSELNGIYECILCACCSASCPSYWWNHDKY) form the 4Fe-4S ferredoxin-type domain. [4Fe-4S] cluster is bound by residues Cys-152, Cys-155, and Cys-158. Position 162 (Cys-162) interacts with [3Fe-4S] cluster. Trp-167 is an a ubiquinone binding site. Residues Cys-209 and Cys-215 each contribute to the [3Fe-4S] cluster site. Residue Cys-219 coordinates [4Fe-4S] cluster.

This sequence belongs to the succinate dehydrogenase/fumarate reductase iron-sulfur protein family. As to quaternary structure, component of complex II composed of four subunits: a flavoprotein (FP), an iron-sulfur protein (IP), and a cytochrome b composed of a large and a small subunit. [2Fe-2S] cluster is required as a cofactor. Requires [3Fe-4S] cluster as cofactor. It depends on [4Fe-4S] cluster as a cofactor.

Its subcellular location is the mitochondrion inner membrane. It carries out the reaction a quinone + succinate = fumarate + a quinol. It functions in the pathway carbohydrate metabolism; tricarboxylic acid cycle; fumarate from succinate (eukaryal route): step 1/1. Its function is as follows. Iron-sulfur protein (IP) subunit of succinate dehydrogenase (SDH) that is involved in complex II of the mitochondrial electron transport chain and is responsible for transferring electrons from succinate to ubiquinone (coenzyme Q). In Porphyra purpurea (Red seaweed), this protein is Succinate dehydrogenase [ubiquinone] iron-sulfur subunit (SDH2).